Here is a 247-residue protein sequence, read N- to C-terminus: uncharacterized protein (247 aa).

4–28 (ALVTGGSRGIGRATALLLAQEGYTV) contacts NADP(+). Ser-142 is a substrate binding site. The Proton acceptor role is filled by Tyr-156.

It belongs to the short-chain dehydrogenases/reductases (SDR) family.

This is an uncharacterized protein from Escherichia coli (strain K12).